The chain runs to 125 residues: Large ribosomal subunit protein uL22 (125 aa).

Belongs to the universal ribosomal protein uL22 family. As to quaternary structure, part of the 50S ribosomal subunit.

This protein binds specifically to 23S rRNA; its binding is stimulated by other ribosomal proteins, e.g. L4, L17, and L20. It is important during the early stages of 50S assembly. It makes multiple contacts with different domains of the 23S rRNA in the assembled 50S subunit and ribosome. Functionally, the globular domain of the protein is located near the polypeptide exit tunnel on the outside of the subunit, while an extended beta-hairpin is found that lines the wall of the exit tunnel in the center of the 70S ribosome. In Acetivibrio thermocellus (strain ATCC 27405 / DSM 1237 / JCM 9322 / NBRC 103400 / NCIMB 10682 / NRRL B-4536 / VPI 7372) (Clostridium thermocellum), this protein is Large ribosomal subunit protein uL22.